The primary structure comprises 437 residues: UDP-N-acetylmuramate--L-alanine ligase (437 aa).

108–114 lines the ATP pocket; it reads GAHGKTS.

This sequence belongs to the MurCDEF family.

It is found in the cytoplasm. It catalyses the reaction UDP-N-acetyl-alpha-D-muramate + L-alanine + ATP = UDP-N-acetyl-alpha-D-muramoyl-L-alanine + ADP + phosphate + H(+). The protein operates within cell wall biogenesis; peptidoglycan biosynthesis. In terms of biological role, cell wall formation. This Staphylococcus haemolyticus (strain JCSC1435) protein is UDP-N-acetylmuramate--L-alanine ligase.